The sequence spans 305 residues: Protein FdhE homolog (305 aa).

Belongs to the FdhE family.

Its subcellular location is the cytoplasm. Necessary for formate dehydrogenase activity. In Stutzerimonas stutzeri (strain A1501) (Pseudomonas stutzeri), this protein is Protein FdhE homolog.